The chain runs to 164 residues: UPF0225 protein Shewana3_2159 (164 aa).

It belongs to the UPF0225 family.

The protein is UPF0225 protein Shewana3_2159 of Shewanella sp. (strain ANA-3).